The sequence spans 386 residues: Succinate--CoA ligase [ADP-forming] subunit beta (386 aa).

One can recognise an ATP-grasp domain in the interval 9–235 (KELFAKHDVP…REEEDPLESA (227 aa)). Residues Lys-44, 51–53 (GRG), Ala-93, and Glu-98 contribute to the ATP site. Mg(2+) contacts are provided by Asn-190 and Asp-204. Residues Asn-255 and 317 to 319 (GIT) contribute to the substrate site.

This sequence belongs to the succinate/malate CoA ligase beta subunit family. Heterotetramer of two alpha and two beta subunits. Mg(2+) serves as cofactor.

It catalyses the reaction succinate + ATP + CoA = succinyl-CoA + ADP + phosphate. The enzyme catalyses GTP + succinate + CoA = succinyl-CoA + GDP + phosphate. Its pathway is carbohydrate metabolism; tricarboxylic acid cycle; succinate from succinyl-CoA (ligase route): step 1/1. Succinyl-CoA synthetase functions in the citric acid cycle (TCA), coupling the hydrolysis of succinyl-CoA to the synthesis of either ATP or GTP and thus represents the only step of substrate-level phosphorylation in the TCA. The beta subunit provides nucleotide specificity of the enzyme and binds the substrate succinate, while the binding sites for coenzyme A and phosphate are found in the alpha subunit. In Nocardioides sp. (strain ATCC BAA-499 / JS614), this protein is Succinate--CoA ligase [ADP-forming] subunit beta.